A 367-amino-acid chain; its full sequence is Probable butyrate kinase (367 aa).

It belongs to the acetokinase family.

It localises to the cytoplasm. The enzyme catalyses butanoate + ATP = butanoyl phosphate + ADP. In Exiguobacterium sibiricum (strain DSM 17290 / CCUG 55495 / CIP 109462 / JCM 13490 / 255-15), this protein is Probable butyrate kinase.